A 1486-amino-acid chain; its full sequence is Glutamate synthase [NADPH] large chain (1486 aa).

Residues 1–11 (MLYDKSLERDN) constitute a propeptide that is removed on maturation. Cysteine 12 functions as the Nucleophile in the catalytic mechanism. The Glutamine amidotransferase type-2 domain maps to 12 to 402 (CGFGLIAHIE…PGELMVIDTR (391 aa)). 1049-1101 (LVETQQALVANGLRHKIRLQVDGGLKTGVDIIKAAILGAESFGFGTGPMVALG) contributes to the FMN binding site. Residues cysteine 1102, cysteine 1108, and cysteine 1113 each coordinate [3Fe-4S] cluster.

Belongs to the glutamate synthase family. Aggregate of 4 catalytic active heterodimers, consisting of a large and a small subunit. [3Fe-4S] cluster is required as a cofactor. It depends on FAD as a cofactor. Requires FMN as cofactor.

It carries out the reaction 2 L-glutamate + NADP(+) = L-glutamine + 2-oxoglutarate + NADPH + H(+). Its pathway is amino-acid biosynthesis; L-glutamate biosynthesis via GLT pathway; L-glutamate from 2-oxoglutarate and L-glutamine (NADP(+) route): step 1/1. The protein operates within energy metabolism; nitrogen metabolism. Functionally, catalyzes the conversion of L-glutamine and 2-oxoglutarate into two molecules of L-glutamate. The polypeptide is Glutamate synthase [NADPH] large chain (gltB) (Escherichia coli (strain K12)).